We begin with the raw amino-acid sequence, 666 residues long: Protein SLY1 (666 aa).

4 consecutive repeat copies span residues 106–142, 220–257, 436–474, and 478–514. The 4 X approximate repeats stretch occupies residues 106-514; the sequence is KENIDIIVND…QNKSLEDGSD (409 aa).

It belongs to the STXBP/unc-18/SEC1 family. Interacts with SED5.

Its subcellular location is the cytoplasm. It localises to the membrane. In terms of biological role, able to suppress the functional loss of YPT1. SLY1 is essential for cell viability. May interact indirectly, or directly with YPT1. This is Protein SLY1 (SLY1) from Saccharomyces cerevisiae (strain ATCC 204508 / S288c) (Baker's yeast).